The chain runs to 218 residues: MTIGIVVFPGSNCDRDVHWATQGCLGMSTRFLWHESTDLNGLEAVVLPGGFSYGDYLRCGAIARFAPVLSSLLEFVNKGGKVLGICNGFQILTELGLLPGALTRNQELHFICDTVPLLISSQRTQWFKNYNQSKNIFLPIAHGEGRYQCSESILKKLQDEDSIALKYKNNPNGSINDIAAITNKSGNVLGMMPHPERAADKDIGGIDGIKILQALLSN.

Residues 2–218 form the Glutamine amidotransferase type-1 domain; sequence TIGIVVFPGS…IKILQALLSN (217 aa). Residue Cys-86 is the Nucleophile of the active site. Residues His-194 and Glu-196 contribute to the active site.

In terms of assembly, part of the FGAM synthase complex composed of 1 PurL, 1 PurQ and 2 PurS subunits.

It localises to the cytoplasm. It carries out the reaction N(2)-formyl-N(1)-(5-phospho-beta-D-ribosyl)glycinamide + L-glutamine + ATP + H2O = 2-formamido-N(1)-(5-O-phospho-beta-D-ribosyl)acetamidine + L-glutamate + ADP + phosphate + H(+). The enzyme catalyses L-glutamine + H2O = L-glutamate + NH4(+). It participates in purine metabolism; IMP biosynthesis via de novo pathway; 5-amino-1-(5-phospho-D-ribosyl)imidazole from N(2)-formyl-N(1)-(5-phospho-D-ribosyl)glycinamide: step 1/2. In terms of biological role, part of the phosphoribosylformylglycinamidine synthase complex involved in the purines biosynthetic pathway. Catalyzes the ATP-dependent conversion of formylglycinamide ribonucleotide (FGAR) and glutamine to yield formylglycinamidine ribonucleotide (FGAM) and glutamate. The FGAM synthase complex is composed of three subunits. PurQ produces an ammonia molecule by converting glutamine to glutamate. PurL transfers the ammonia molecule to FGAR to form FGAM in an ATP-dependent manner. PurS interacts with PurQ and PurL and is thought to assist in the transfer of the ammonia molecule from PurQ to PurL. This is Phosphoribosylformylglycinamidine synthase subunit PurQ from Prochlorococcus marinus (strain SARG / CCMP1375 / SS120).